The primary structure comprises 463 residues: ATP-dependent protease ATPase subunit HslU (463 aa).

Residues valine 21, 63-68, aspartate 276, glutamate 341, and arginine 413 each bind ATP; that span reads GVGKTE.

This sequence belongs to the ClpX chaperone family. HslU subfamily. A double ring-shaped homohexamer of HslV is capped on each side by a ring-shaped HslU homohexamer. The assembly of the HslU/HslV complex is dependent on binding of ATP.

It is found in the cytoplasm. Functionally, ATPase subunit of a proteasome-like degradation complex; this subunit has chaperone activity. The binding of ATP and its subsequent hydrolysis by HslU are essential for unfolding of protein substrates subsequently hydrolyzed by HslV. HslU recognizes the N-terminal part of its protein substrates and unfolds these before they are guided to HslV for hydrolysis. This chain is ATP-dependent protease ATPase subunit HslU, found in Thermotoga sp. (strain RQ2).